Reading from the N-terminus, the 99-residue chain is Aspartyl/glutamyl-tRNA(Asn/Gln) amidotransferase subunit C (99 aa).

It belongs to the GatC family. As to quaternary structure, heterotrimer of A, B and C subunits.

It catalyses the reaction L-glutamyl-tRNA(Gln) + L-glutamine + ATP + H2O = L-glutaminyl-tRNA(Gln) + L-glutamate + ADP + phosphate + H(+). It carries out the reaction L-aspartyl-tRNA(Asn) + L-glutamine + ATP + H2O = L-asparaginyl-tRNA(Asn) + L-glutamate + ADP + phosphate + 2 H(+). Its function is as follows. Allows the formation of correctly charged Asn-tRNA(Asn) or Gln-tRNA(Gln) through the transamidation of misacylated Asp-tRNA(Asn) or Glu-tRNA(Gln) in organisms which lack either or both of asparaginyl-tRNA or glutaminyl-tRNA synthetases. The reaction takes place in the presence of glutamine and ATP through an activated phospho-Asp-tRNA(Asn) or phospho-Glu-tRNA(Gln). This is Aspartyl/glutamyl-tRNA(Asn/Gln) amidotransferase subunit C from Paracidovorax citrulli (strain AAC00-1) (Acidovorax citrulli).